The following is a 431-amino-acid chain: Nuclear receptor subfamily 1 group I member 2 (431 aa).

Residues 35-104 (LQICRVCGDK…RLRKCLESGM (70 aa)) constitute a DNA-binding region (nuclear receptor). 2 consecutive NR C4-type zinc fingers follow at residues 38–58 (CRVC…CEGC) and 74–99 (CPFR…LRKC). A Bipartite nuclear localization signal motif is present at residues 63–89 (RRAMKRNVRLRCPFRKGTCEITRKTRR). Residues 105-142 (KKEMIMSDAAVEQRRALIKRKKREKIEAPPPGGQGLTE) are hinge. Positions 143–430 (EQQALIQELM…LMQELFSSTD (288 aa)) constitute an NR LBD domain. Hyperforin is bound by residues Ser244 and 282–285 (ILRF).

The protein belongs to the nuclear hormone receptor family. NR1 subfamily. In terms of assembly, heterodimer with RXRA. Interacts with NCOA1. Interacts (via domain NR LBD) with CRY1 and CRY2 in a ligand-dependent manner.

The protein localises to the nucleus. Nuclear receptor that binds and is activated by a variety of endogenous and xenobiotic compounds. Transcription factor that activates the transcription of multiple genes involved in the metabolism and secretion of potentially harmful xenobiotics, endogenous compounds and drugs. Response to specific ligands is species-specific, due to differences in the ligand-binding domain. Binds to a response element in the promoters of the CYP3A4 and ABCB1/MDR1 genes. Activated by naturally occurring steroids such as pregnenolone and progesterone, the cholesterol metabolite 5-beta-cholestane-3-alpha,7-alpha,12-alpha-triol, synthetic glucocorticoids and antiglucocorticoids and 16-alpha-carbonitrile (PCN). The chain is Nuclear receptor subfamily 1 group I member 2 (Nr1i2) from Mus musculus (Mouse).